We begin with the raw amino-acid sequence, 293 residues long: Ribosomal protein L11 methyltransferase (293 aa).

Positions 145, 166, 188, and 230 each coordinate S-adenosyl-L-methionine.

The protein belongs to the methyltransferase superfamily. PrmA family.

It is found in the cytoplasm. The enzyme catalyses L-lysyl-[protein] + 3 S-adenosyl-L-methionine = N(6),N(6),N(6)-trimethyl-L-lysyl-[protein] + 3 S-adenosyl-L-homocysteine + 3 H(+). In terms of biological role, methylates ribosomal protein L11. This chain is Ribosomal protein L11 methyltransferase, found in Erwinia tasmaniensis (strain DSM 17950 / CFBP 7177 / CIP 109463 / NCPPB 4357 / Et1/99).